The chain runs to 510 residues: 2,3-bisphosphoglycerate-independent phosphoglycerate mutase (510 aa).

Mn(2+)-binding residues include aspartate 12 and serine 62. Serine 62 (phosphoserine intermediate) is an active-site residue. Substrate-binding positions include histidine 123, 153-154, arginine 185, arginine 191, 261-264, and lysine 336; these read RD and RPDR. Positions 403, 407, 444, 445, and 462 each coordinate Mn(2+).

The protein belongs to the BPG-independent phosphoglycerate mutase family. As to quaternary structure, monomer. Mn(2+) is required as a cofactor.

It carries out the reaction (2R)-2-phosphoglycerate = (2R)-3-phosphoglycerate. It participates in carbohydrate degradation; glycolysis; pyruvate from D-glyceraldehyde 3-phosphate: step 3/5. Its function is as follows. Essential for rapid growth and for sporulation. Catalyzes the interconversion of 2-phosphoglycerate and 3-phosphoglycerate. The polypeptide is 2,3-bisphosphoglycerate-independent phosphoglycerate mutase (Priestia megaterium (strain ATCC 12872 / QMB1551) (Bacillus megaterium)).